Consider the following 396-residue polypeptide: Elongation factor Tu (396 aa).

Residues 10–206 form the tr-type G domain; that stretch reads KPHCNIGTIG…NVDEYIPQPE (197 aa). Residues 19 to 26 form a G1 region; the sequence is GHVDHGKT. 19-26 contacts GTP; sequence GHVDHGKT. Position 26 (Thr-26) interacts with Mg(2+). Residues 60–64 are G2; the sequence is GITIS. Residues 81–84 form a G3 region; the sequence is DCPG. GTP is bound by residues 81–85 and 136–139; these read DCPGH and NKCD. Positions 136 to 139 are G4; the sequence is NKCD. Positions 174–176 are G5; the sequence is SAL.

Belongs to the TRAFAC class translation factor GTPase superfamily. Classic translation factor GTPase family. EF-Tu/EF-1A subfamily. Monomer.

It is found in the cytoplasm. The enzyme catalyses GTP + H2O = GDP + phosphate + H(+). GTP hydrolase that promotes the GTP-dependent binding of aminoacyl-tRNA to the A-site of ribosomes during protein biosynthesis. The chain is Elongation factor Tu from Bradyrhizobium sp. (strain BTAi1 / ATCC BAA-1182).